A 157-amino-acid chain; its full sequence is Large ribosomal subunit protein uL3 (157 aa).

The tract at residues 57-98 (GKGFAGSIKRHNQSRGPESHGSRYHRRPGSMGPIKGKLKGKK) is disordered.

Belongs to the universal ribosomal protein uL3 family. As to quaternary structure, part of the 50S ribosomal subunit. Forms a cluster with proteins L14 and L19.

Its function is as follows. One of the primary rRNA binding proteins, it binds directly near the 3'-end of the 23S rRNA, where it nucleates assembly of the 50S subunit. This Onion yellows phytoplasma (strain OY-M) protein is Large ribosomal subunit protein uL3 (rplC).